The chain runs to 269 residues: Shikimate dehydrogenase (NADP(+)) (269 aa).

Shikimate contacts are provided by residues 19–21 and threonine 66; that span reads SLS. The Proton acceptor role is filled by lysine 70. Aspartate 82 serves as a coordination point for NADP(+). Positions 91 and 106 each coordinate shikimate. NADP(+)-binding positions include 130 to 134, 153 to 158, and isoleucine 214; these read GAGGA and NRTKEK. Shikimate is bound at residue tyrosine 216. An NADP(+)-binding site is contributed by glycine 235. Glutamine 242 is a binding site for shikimate.

This sequence belongs to the shikimate dehydrogenase family. In terms of assembly, homodimer.

It carries out the reaction shikimate + NADP(+) = 3-dehydroshikimate + NADPH + H(+). Its pathway is metabolic intermediate biosynthesis; chorismate biosynthesis; chorismate from D-erythrose 4-phosphate and phosphoenolpyruvate: step 4/7. Functionally, involved in the biosynthesis of the chorismate, which leads to the biosynthesis of aromatic amino acids. Catalyzes the reversible NADPH linked reduction of 3-dehydroshikimate (DHSA) to yield shikimate (SA). In Aquifex aeolicus (strain VF5), this protein is Shikimate dehydrogenase (NADP(+)).